Here is a 571-residue protein sequence, read N- to C-terminus: WAP, Kazal, immunoglobulin, Kunitz and NTR domain-containing protein 2 (571 aa).

The first 29 residues, 1 to 29 (MCAPGYHRFWFHWGLLLLLLLEAPLRGLA), serve as a signal peptide directing secretion. Residues 34–87 (RYSHAGICPNDMNPNLWVDAQSTCKRECETDQECETYEKCCPNVCGTKSCVAAR) form the WAP domain. 8 cysteine pairs are disulfide-bonded: C41/C74, C57/C78, C61/C73, C67/C83, C129/C159, C133/C152, C141/C170, and C226/C282. The Kazal-like domain occupies 121 to 172 (WDGQPVCKCKDRCEKEPSFTCASDGLTYYNRCFMDAEACSKGITLSVVTCRY). The 94-residue stretch at 205 to 298 (PALLNHPVHQ…GVLRADFPLS (94 aa)) folds into the Ig-like C2-type domain. The N-linked (GlcNAc...) asparagine glycan is linked to N314. 9 cysteine pairs are disulfide-bonded: C323–C373, C332–C356, C348–C369, C381–C431, C390–C414, C406–C427, C440–C510, C443–C512, and C454–C561. BPTI/Kunitz inhibitor domains lie at 323–373 (CLKP…MLAC) and 381–431 (CSLP…EESC). The 122-residue stretch at 440–561 (CRACKPRQKL…LREVMYKKTC (122 aa)) folds into the NTR domain. N514 carries N-linked (GlcNAc...) asparagine glycosylation.

This sequence belongs to the WFIKKN family. In terms of assembly, interacts with both mature and propeptide myostatin/MSTN. Widely expressed, with high expression in skeletal muscle and heart. Also expressed in brain, lung and testis. Weakly expressed in liver and kidney.

The protein resides in the secreted. Functionally, protease-inhibitor that contains multiple distinct protease inhibitor domains. Probably has serine protease- and metalloprotease-inhibitor activity. Inhibits the biological activity of mature myostatin, but not activin. In Mus musculus (Mouse), this protein is WAP, Kazal, immunoglobulin, Kunitz and NTR domain-containing protein 2 (Wfikkn2).